A 747-amino-acid polypeptide reads, in one-letter code: Histone-lysine N-methyltransferase EZH1 (747 aa).

Residues 188-231 are disordered; the sequence is DEEEEGHNDTSDGKQDDSKEDLPVTRKRKRHAIEGNKKSSKKQF. Residues 194–211 show a composition bias toward basic and acidic residues; the sequence is HNDTSDGKQDDSKEDLPV. A Glycyl lysine isopeptide (Lys-Gly) (interchain with G-Cter in SUMO2) cross-link involves residue K327. Residues 378–421 form a disordered region; that stretch reads SAVAETKEGDSDRDTGNDWASSSSEANSRCQTPTKQKASPAPPQ. The span at 382 to 393 shows a compositional bias: basic and acidic residues; it reads ETKEGDSDRDTG. The span at 395–414 shows a compositional bias: polar residues; it reads DWASSSSEANSRCQTPTKQK. A Nuclear localization signal motif is present at residues 491–496; the sequence is QKKKRK. A CXC domain is found at 504–606; sequence CRKIQLKKDN…CKVVSCKNCS (103 aa). Residues 613-728 form the SET domain; it reads KHLLLAPSDV…AGEELFLDYR (116 aa).

It belongs to the class V-like SAM-binding methyltransferase superfamily. Histone-lysine methyltransferase family. EZ subfamily. As to quaternary structure, component of the PRC2/EED-EZH1 complex, which includes EED, EZH1, SUZ12, RBBP4 and AEBP2. The PRC2/EED-EZH1 is less abundant than the PRC2/EED-EZH2 complex, has weak methyltransferase activity and compacts chromatin in the absence of the methyltransferase cofactor S-adenosyl-L-methionine (SAM). Interacts with EZHIP; the interaction blocks EZH1 methyltransferase activity.

The protein resides in the nucleus. It carries out the reaction L-lysyl(27)-[histone H3] + 3 S-adenosyl-L-methionine = N(6),N(6),N(6)-trimethyl-L-lysyl(27)-[histone H3] + 3 S-adenosyl-L-homocysteine + 3 H(+). Polycomb group (PcG) protein. Catalytic subunit of the PRC2/EED-EZH1 complex, which methylates 'Lys-27' of histone H3, leading to transcriptional repression of the affected target gene. Able to mono-, di- and trimethylate 'Lys-27' of histone H3 to form H3K27me1, H3K27me2 and H3K27me3, respectively. Required for embryonic stem cell derivation and self-renewal, suggesting that it is involved in safeguarding embryonic stem cell identity. Compared to EZH2-containing complexes, it is less abundant in embryonic stem cells, has weak methyltransferase activity and plays a less critical role in forming H3K27me3, which is required for embryonic stem cell identity and proper differentiation. The polypeptide is Histone-lysine N-methyltransferase EZH1 (EZH1) (Pongo abelii (Sumatran orangutan)).